The chain runs to 435 residues: U-box domain-containing protein 36 (435 aa).

Positions 227 to 345 (EAEASKRKAR…LKGKREEEEA (119 aa)) form a coiled coil. The 75-residue stretch at 352 to 426 (EPPQYFICPI…QEWLQLRELL (75 aa)) folds into the U-box domain.

It carries out the reaction S-ubiquitinyl-[E2 ubiquitin-conjugating enzyme]-L-cysteine + [acceptor protein]-L-lysine = [E2 ubiquitin-conjugating enzyme]-L-cysteine + N(6)-ubiquitinyl-[acceptor protein]-L-lysine.. It participates in protein modification; protein ubiquitination. Functions as an E3 ubiquitin ligase. This chain is U-box domain-containing protein 36 (PUB36), found in Arabidopsis thaliana (Mouse-ear cress).